Reading from the N-terminus, the 327-residue chain is Ribosomal RNA large subunit methyltransferase F (327 aa).

The segment at 1–31 (MTHPVTPKNTTRPTPANKPAASTLHPRNPHQ) is disordered.

This sequence belongs to the methyltransferase superfamily. METTL16/RlmF family.

The protein resides in the cytoplasm. The enzyme catalyses adenosine(1618) in 23S rRNA + S-adenosyl-L-methionine = N(6)-methyladenosine(1618) in 23S rRNA + S-adenosyl-L-homocysteine + H(+). In terms of biological role, specifically methylates the adenine in position 1618 of 23S rRNA. This is Ribosomal RNA large subunit methyltransferase F from Psychrobacter sp. (strain PRwf-1).